Reading from the N-terminus, the 400-residue chain is Exodeoxyribonuclease 7 large subunit (400 aa).

It belongs to the XseA family. In terms of assembly, heterooligomer composed of large and small subunits.

Its subcellular location is the cytoplasm. The enzyme catalyses Exonucleolytic cleavage in either 5'- to 3'- or 3'- to 5'-direction to yield nucleoside 5'-phosphates.. Functionally, bidirectionally degrades single-stranded DNA into large acid-insoluble oligonucleotides, which are then degraded further into small acid-soluble oligonucleotides. In Clostridium perfringens (strain ATCC 13124 / DSM 756 / JCM 1290 / NCIMB 6125 / NCTC 8237 / Type A), this protein is Exodeoxyribonuclease 7 large subunit.